The sequence spans 372 residues: GDSL esterase/lipase At1g54020 (372 aa).

The N-terminal stretch at 1-26 is a signal peptide; it reads MECSSVSVLGILLVFPLLHNLVTISG. Serine 40 acts as the Nucleophile in catalysis. N-linked (GlcNAc...) asparagine glycosylation is found at asparagine 161 and asparagine 280. Catalysis depends on residues aspartate 314 and histidine 317.

Belongs to the 'GDSL' lipolytic enzyme family.

It is found in the secreted. This chain is GDSL esterase/lipase At1g54020, found in Arabidopsis thaliana (Mouse-ear cress).